We begin with the raw amino-acid sequence, 157 residues long: Arginine repressor (157 aa).

Belongs to the ArgR family.

Its subcellular location is the cytoplasm. The protein operates within amino-acid biosynthesis; L-arginine biosynthesis [regulation]. Regulates arginine biosynthesis genes. In Colwellia psychrerythraea (strain 34H / ATCC BAA-681) (Vibrio psychroerythus), this protein is Arginine repressor.